We begin with the raw amino-acid sequence, 652 residues long: Ethylmalonyl-CoA mutase (652 aa).

In terms of domain architecture, B12-binding spans Pro519–Thr647. His532 contributes to the adenosylcob(III)alamin binding site.

Belongs to the methylmalonyl-CoA mutase family. In terms of assembly, homodimer. It depends on adenosylcob(III)alamin as a cofactor.

The enzyme catalyses (2R)-ethylmalonyl-CoA = (2S)-methylsuccinyl-CoA. Functionally, radical enzyme that catalyzes the transformation of (2R)-ethylmalonyl-CoA to (2S)-methylsuccinyl-CoA. Is involved in the ethylmalonyl-CoA pathway for acetyl-CoA assimilation required for R.sphaeroides growth on acetate as sole carbon source. Is highly specific for its substrate, ethylmalonyl-CoA, and accepts methylmalonyl-CoA only at 0.2% relative activity. The sequence is that of Ethylmalonyl-CoA mutase from Cereibacter sphaeroides (strain ATCC 17023 / DSM 158 / JCM 6121 / CCUG 31486 / LMG 2827 / NBRC 12203 / NCIMB 8253 / ATH 2.4.1.) (Rhodobacter sphaeroides).